The primary structure comprises 349 residues: Phosphoribosylformylglycinamidine cyclo-ligase (349 aa).

This sequence belongs to the AIR synthase family.

Its subcellular location is the cytoplasm. The enzyme catalyses 2-formamido-N(1)-(5-O-phospho-beta-D-ribosyl)acetamidine + ATP = 5-amino-1-(5-phospho-beta-D-ribosyl)imidazole + ADP + phosphate + H(+). The protein operates within purine metabolism; IMP biosynthesis via de novo pathway; 5-amino-1-(5-phospho-D-ribosyl)imidazole from N(2)-formyl-N(1)-(5-phospho-D-ribosyl)glycinamide: step 2/2. The sequence is that of Phosphoribosylformylglycinamidine cyclo-ligase from Lactobacillus helveticus (strain DPC 4571).